The primary structure comprises 208 residues: Uracil phosphoribosyltransferase (208 aa).

Residues Arg-78, Arg-103, and 130 to 138 (DPMLATGGS) contribute to the 5-phospho-alpha-D-ribose 1-diphosphate site. Uracil-binding positions include Ile-193 and 198 to 200 (GDA). Position 199 (Asp-199) interacts with 5-phospho-alpha-D-ribose 1-diphosphate.

The protein belongs to the UPRTase family. Mg(2+) is required as a cofactor.

The catalysed reaction is UMP + diphosphate = 5-phospho-alpha-D-ribose 1-diphosphate + uracil. Its pathway is pyrimidine metabolism; UMP biosynthesis via salvage pathway; UMP from uracil: step 1/1. With respect to regulation, allosterically activated by GTP. In terms of biological role, catalyzes the conversion of uracil and 5-phospho-alpha-D-ribose 1-diphosphate (PRPP) to UMP and diphosphate. The chain is Uracil phosphoribosyltransferase from Shewanella amazonensis (strain ATCC BAA-1098 / SB2B).